Consider the following 929-residue polypeptide: Isoleucine--tRNA ligase (929 aa).

The 'HIGH' region motif lies at 57–67 (PYANGNIHVGH). Residue glutamate 554 coordinates L-isoleucyl-5'-AMP. A 'KMSKS' region motif is present at residues 595–599 (KMSKS). Lysine 598 provides a ligand contact to ATP. Zn(2+) contacts are provided by cysteine 888, cysteine 891, cysteine 908, and cysteine 911.

Belongs to the class-I aminoacyl-tRNA synthetase family. IleS type 1 subfamily. As to quaternary structure, monomer. It depends on Zn(2+) as a cofactor.

It localises to the cytoplasm. It carries out the reaction tRNA(Ile) + L-isoleucine + ATP = L-isoleucyl-tRNA(Ile) + AMP + diphosphate. Catalyzes the attachment of isoleucine to tRNA(Ile). As IleRS can inadvertently accommodate and process structurally similar amino acids such as valine, to avoid such errors it has two additional distinct tRNA(Ile)-dependent editing activities. One activity is designated as 'pretransfer' editing and involves the hydrolysis of activated Val-AMP. The other activity is designated 'posttransfer' editing and involves deacylation of mischarged Val-tRNA(Ile). This Streptococcus thermophilus (strain ATCC BAA-491 / LMD-9) protein is Isoleucine--tRNA ligase.